Reading from the N-terminus, the 175-residue chain is ATP synthase subunit b 1 (175 aa).

A helical transmembrane segment spans residues 26 to 48 (IINLAIIIGVLYVYGSKFIGNIL).

This sequence belongs to the ATPase B chain family. F-type ATPases have 2 components, F(1) - the catalytic core - and F(0) - the membrane proton channel. F(1) has five subunits: alpha(3), beta(3), gamma(1), delta(1), epsilon(1). F(0) has four main subunits: a(1), b(1), b'(1) and c(10-14). The alpha and beta chains form an alternating ring which encloses part of the gamma chain. F(1) is attached to F(0) by a central stalk formed by the gamma and epsilon chains, while a peripheral stalk is formed by the delta, b and b' chains.

The protein localises to the cellular thylakoid membrane. Its function is as follows. F(1)F(0) ATP synthase produces ATP from ADP in the presence of a proton or sodium gradient. F-type ATPases consist of two structural domains, F(1) containing the extramembraneous catalytic core and F(0) containing the membrane proton channel, linked together by a central stalk and a peripheral stalk. During catalysis, ATP synthesis in the catalytic domain of F(1) is coupled via a rotary mechanism of the central stalk subunits to proton translocation. In terms of biological role, component of the F(0) channel, it forms part of the peripheral stalk, linking F(1) to F(0). The polypeptide is ATP synthase subunit b 1 (Picosynechococcus sp. (strain ATCC 27264 / PCC 7002 / PR-6) (Agmenellum quadruplicatum)).